Here is a 160-residue protein sequence, read N- to C-terminus: Large ribosomal subunit protein bL17 (160 aa).

Residues 128–160 (KKATKTRRSRKRKSADVVVEAAPAEETPKAAEE) are disordered. Basic residues predominate over residues 129 to 140 (KATKTRRSRKRK).

It belongs to the bacterial ribosomal protein bL17 family. As to quaternary structure, part of the 50S ribosomal subunit. Contacts protein L32.

This Porphyromonas gingivalis (strain ATCC 33277 / DSM 20709 / CIP 103683 / JCM 12257 / NCTC 11834 / 2561) protein is Large ribosomal subunit protein bL17.